Consider the following 798-residue polypeptide: Protocadherin beta-2 (798 aa).

Positions M1–C30 are cleaved as a signal peptide. Over Q31–L692 the chain is Extracellular. Cadherin domains are found at residues V37 to F135, L136 to F244, Y249 to L349, L354 to F453, and Y458 to V563. N171 carries N-linked (GlcNAc...) asparagine glycosylation. An N6-acetyllysine modification is found at K299. 2 N-linked (GlcNAc...) asparagine glycosylation sites follow: N420 and N438. The N-linked (GlcNAc...) asparagine glycan is linked to N569. In terms of domain architecture, Cadherin 6 spans G570–L673. Residues V693–V713 traverse the membrane as a helical segment. The Cytoplasmic segment spans residues R714 to T798.

It localises to the cell membrane. In terms of biological role, potential calcium-dependent cell-adhesion protein. May be involved in the establishment and maintenance of specific neuronal connections in the brain. This Homo sapiens (Human) protein is Protocadherin beta-2 (PCDHB2).